Here is a 178-residue protein sequence, read N- to C-terminus: ATP synthase subunit b, chloroplastic (178 aa).

The chain crosses the membrane as a helical span at residues 26–46 (TNLINIIILLIILFYFLKGLL).

It belongs to the ATPase B chain family. In terms of assembly, F-type ATPases have 2 components, F(1) - the catalytic core - and F(0) - the membrane proton channel. F(1) has five subunits: alpha(3), beta(3), gamma(1), delta(1), epsilon(1). F(0) has four main subunits: a(1), b(1), b'(1) and c(10-14). The alpha and beta chains form an alternating ring which encloses part of the gamma chain. F(1) is attached to F(0) by a central stalk formed by the gamma and epsilon chains, while a peripheral stalk is formed by the delta, b and b' chains.

It is found in the plastid. The protein localises to the chloroplast thylakoid membrane. Functionally, f(1)F(0) ATP synthase produces ATP from ADP in the presence of a proton or sodium gradient. F-type ATPases consist of two structural domains, F(1) containing the extramembraneous catalytic core and F(0) containing the membrane proton channel, linked together by a central stalk and a peripheral stalk. During catalysis, ATP synthesis in the catalytic domain of F(1) is coupled via a rotary mechanism of the central stalk subunits to proton translocation. In terms of biological role, component of the F(0) channel, it forms part of the peripheral stalk, linking F(1) to F(0). This Vaucheria litorea (Yellow-green alga) protein is ATP synthase subunit b, chloroplastic.